We begin with the raw amino-acid sequence, 166 residues long: Photosystem I assembly protein Ycf3 (166 aa).

TPR repeat units lie at residues 35 to 68, 72 to 105, and 120 to 153; these read AFTY…EIDP, SYIL…NPSL, and GEQA…APTN.

It belongs to the Ycf3 family.

It is found in the plastid. It localises to the chloroplast thylakoid membrane. Its function is as follows. Essential for the assembly of the photosystem I (PSI) complex. May act as a chaperone-like factor to guide the assembly of the PSI subunits. The chain is Photosystem I assembly protein Ycf3 from Oltmannsiellopsis viridis (Marine flagellate).